The chain runs to 337 residues: Glyceraldehyde-3-phosphate dehydrogenase (337 aa).

NAD(+) is bound by residues Arg-17 to Ile-18, Asp-39, Lys-83, and Ser-125. D-glyceraldehyde 3-phosphate is bound by residues Ser-156–Thr-158, Thr-187, Arg-202, Thr-215–Gly-216, and Arg-238. Cys-157 (nucleophile) is an active-site residue. Asn-319 serves as a coordination point for NAD(+).

This sequence belongs to the glyceraldehyde-3-phosphate dehydrogenase family. As to quaternary structure, homotetramer.

It is found in the cytoplasm. The enzyme catalyses D-glyceraldehyde 3-phosphate + phosphate + NAD(+) = (2R)-3-phospho-glyceroyl phosphate + NADH + H(+). It participates in carbohydrate degradation; glycolysis; pyruvate from D-glyceraldehyde 3-phosphate: step 1/5. Catalyzes the oxidative phosphorylation of glyceraldehyde 3-phosphate (G3P) to 1,3-bisphosphoglycerate (BPG) using the cofactor NAD. The first reaction step involves the formation of a hemiacetal intermediate between G3P and a cysteine residue, and this hemiacetal intermediate is then oxidized to a thioester, with concomitant reduction of NAD to NADH. The reduced NADH is then exchanged with the second NAD, and the thioester is attacked by a nucleophilic inorganic phosphate to produce BPG. In Mycoplasma genitalium (strain ATCC 33530 / DSM 19775 / NCTC 10195 / G37) (Mycoplasmoides genitalium), this protein is Glyceraldehyde-3-phosphate dehydrogenase (gapA).